The chain runs to 723 residues: Heme/hemopexin utilization protein C (723 aa).

The first 21 residues, 1–21 (MRFSKLSLAITTTLVTANALA), serve as a signal peptide directing secretion. One can recognise a TBDR plug domain in the interval 36–147 (DPSRFAYTPE…LGGVVAMRTP (112 aa)). The 566-residue stretch at 158–723 (KFGVKIRQGY…NAKISAVYSF (566 aa)) folds into the TBDR beta-barrel domain. Positions 706 to 723 (SLMEGTGRNAKISAVYSF) match the TonB C-terminal box motif.

This sequence belongs to the TonB-dependent receptor family.

The protein localises to the cell outer membrane. In terms of biological role, required for utilization of free heme at low concentrations. This is Heme/hemopexin utilization protein C (hxuC) from Haemophilus influenzae (strain ATCC 51907 / DSM 11121 / KW20 / Rd).